A 198-amino-acid chain; its full sequence is Molybdopterin synthase catalytic subunit (198 aa).

Substrate contacts are provided by residues 107–108 (HR), Lys123, and 130–132 (KKE).

The protein belongs to the MoaE family. MOCS2B subfamily. As to quaternary structure, heterotetramer; composed of 2 small (MOCS2A) and 2 large (MOCS2B) subunits.

The protein localises to the cytoplasm. It carries out the reaction 2 [molybdopterin-synthase sulfur-carrier protein]-C-terminal-Gly-aminoethanethioate + cyclic pyranopterin phosphate + H2O = molybdopterin + 2 [molybdopterin-synthase sulfur-carrier protein]-C-terminal Gly-Gly + 2 H(+). It functions in the pathway cofactor biosynthesis; molybdopterin biosynthesis. In terms of biological role, catalytic subunit of the molybdopterin synthase complex, a complex that catalyzes the conversion of precursor Z into molybdopterin. Acts by mediating the incorporation of 2 sulfur atoms from thiocarboxylated MOCS2A into precursor Z to generate a dithiolene group. The sequence is that of Molybdopterin synthase catalytic subunit from Arabidopsis thaliana (Mouse-ear cress).